The sequence spans 122 residues: Large ribosomal subunit protein uL18 (122 aa).

Belongs to the universal ribosomal protein uL18 family. Part of the 50S ribosomal subunit; part of the 5S rRNA/L5/L18/L25 subcomplex. Contacts the 5S and 23S rRNAs.

This is one of the proteins that bind and probably mediate the attachment of the 5S RNA into the large ribosomal subunit, where it forms part of the central protuberance. The sequence is that of Large ribosomal subunit protein uL18 from Desulfitobacterium hafniense (strain Y51).